A 339-amino-acid polypeptide reads, in one-letter code: Anthranilate phosphoribosyltransferase (339 aa).

Residues Gly-80, 83-84 (GD), 90-93 (NVST), 108-116 (KHGNRSVTS), and Ser-120 each bind 5-phospho-alpha-D-ribose 1-diphosphate. Gly-80 is an anthranilate binding site. Ser-92 lines the Mg(2+) pocket. Residue Asn-111 coordinates anthranilate. Anthranilate is bound at residue Arg-166. The Mg(2+) site is built by Asp-225 and Glu-226.

It belongs to the anthranilate phosphoribosyltransferase family. Homodimer. It depends on Mg(2+) as a cofactor.

The catalysed reaction is N-(5-phospho-beta-D-ribosyl)anthranilate + diphosphate = 5-phospho-alpha-D-ribose 1-diphosphate + anthranilate. It participates in amino-acid biosynthesis; L-tryptophan biosynthesis; L-tryptophan from chorismate: step 2/5. Functionally, catalyzes the transfer of the phosphoribosyl group of 5-phosphorylribose-1-pyrophosphate (PRPP) to anthranilate to yield N-(5'-phosphoribosyl)-anthranilate (PRA). The protein is Anthranilate phosphoribosyltransferase of Ignicoccus hospitalis (strain KIN4/I / DSM 18386 / JCM 14125).